Reading from the N-terminus, the 298-residue chain is Cyclin-dependent kinase 1 (298 aa).

Position 2 is an N-acetylserine (Ser2). A Protein kinase domain is found at 8–295 (YKRLEKVGEG…ARRAAIHPYF (288 aa)). ATP-binding positions include 14–22 (VGEGTYGVV) and Lys40. At Tyr19 the chain carries Phosphotyrosine. The active-site Proton acceptor is the Asp136. Thr169 is subject to Phosphothreonine.

Belongs to the protein kinase superfamily. CMGC Ser/Thr protein kinase family. CDC2/CDKX subfamily. In terms of assembly, forms a stable but non-covalent complex with the CKS1 protein and with a cyclin.

The catalysed reaction is L-seryl-[protein] + ATP = O-phospho-L-seryl-[protein] + ADP + H(+). It carries out the reaction L-threonyl-[protein] + ATP = O-phospho-L-threonyl-[protein] + ADP + H(+). With respect to regulation, phosphorylation at Thr-18 or Tyr-19 inactivates the enzyme, while phosphorylation at Thr-169 activates it. Cyclin-dependent kinase that acts as a master regulator of the mitotic and meiotic cell cycles. Required to drive the G1-S transition. More than 200 substrates have been identified. Substrate specificity is in part regulated by the bound cyclin protein. Phosphorylates YTA7 during S-phase to promote transcription of histones. May phosphorylate CNN1, to contribute to the enrichment of CNN1 on anaphase kinetochores. This chain is Cyclin-dependent kinase 1, found in Saccharomyces cerevisiae (strain ATCC 204508 / S288c) (Baker's yeast).